Consider the following 193-residue polypeptide: Acyl carrier protein phosphodiesterase (193 aa).

It belongs to the AcpH family.

It catalyses the reaction holo-[ACP] + H2O = apo-[ACP] + (R)-4'-phosphopantetheine + H(+). Converts holo-ACP to apo-ACP by hydrolytic cleavage of the phosphopantetheine prosthetic group from ACP. This chain is Acyl carrier protein phosphodiesterase, found in Escherichia coli O127:H6 (strain E2348/69 / EPEC).